The sequence spans 430 residues: Serine--tRNA ligase (430 aa).

The segment at 44 to 65 (TESLQAERNSRSKSIGAAKARG) is disordered. 237–239 (TAE) lines the L-serine pocket. 268–270 (RSE) contacts ATP. Position 291 (E291) interacts with L-serine. ATP is bound at residue 355 to 358 (EISS). S391 lines the L-serine pocket.

It belongs to the class-II aminoacyl-tRNA synthetase family. Type-1 seryl-tRNA synthetase subfamily. Homodimer. The tRNA molecule binds across the dimer.

Its subcellular location is the cytoplasm. It catalyses the reaction tRNA(Ser) + L-serine + ATP = L-seryl-tRNA(Ser) + AMP + diphosphate + H(+). The catalysed reaction is tRNA(Sec) + L-serine + ATP = L-seryl-tRNA(Sec) + AMP + diphosphate + H(+). It participates in aminoacyl-tRNA biosynthesis; selenocysteinyl-tRNA(Sec) biosynthesis; L-seryl-tRNA(Sec) from L-serine and tRNA(Sec): step 1/1. Functionally, catalyzes the attachment of serine to tRNA(Ser). Is also able to aminoacylate tRNA(Sec) with serine, to form the misacylated tRNA L-seryl-tRNA(Sec), which will be further converted into selenocysteinyl-tRNA(Sec). This is Serine--tRNA ligase from Edwardsiella ictaluri (strain 93-146).